Consider the following 282-residue polypeptide: Bifunctional protein FolD (282 aa).

Residues 165–167 (NRS), Ser190, and Ile231 each bind NADP(+).

This sequence belongs to the tetrahydrofolate dehydrogenase/cyclohydrolase family. As to quaternary structure, homodimer.

It catalyses the reaction (6R)-5,10-methylene-5,6,7,8-tetrahydrofolate + NADP(+) = (6R)-5,10-methenyltetrahydrofolate + NADPH. The enzyme catalyses (6R)-5,10-methenyltetrahydrofolate + H2O = (6R)-10-formyltetrahydrofolate + H(+). Its pathway is one-carbon metabolism; tetrahydrofolate interconversion. Catalyzes the oxidation of 5,10-methylenetetrahydrofolate to 5,10-methenyltetrahydrofolate and then the hydrolysis of 5,10-methenyltetrahydrofolate to 10-formyltetrahydrofolate. The sequence is that of Bifunctional protein FolD from Clostridium botulinum (strain Langeland / NCTC 10281 / Type F).